Consider the following 285-residue polypeptide: 2-dehydro-3-deoxyphosphooctonate aldolase (285 aa).

The protein belongs to the KdsA family.

The protein resides in the cytoplasm. It carries out the reaction D-arabinose 5-phosphate + phosphoenolpyruvate + H2O = 3-deoxy-alpha-D-manno-2-octulosonate-8-phosphate + phosphate. It functions in the pathway carbohydrate biosynthesis; 3-deoxy-D-manno-octulosonate biosynthesis; 3-deoxy-D-manno-octulosonate from D-ribulose 5-phosphate: step 2/3. It participates in bacterial outer membrane biogenesis; lipopolysaccharide biosynthesis. The chain is 2-dehydro-3-deoxyphosphooctonate aldolase from Polaromonas sp. (strain JS666 / ATCC BAA-500).